A 252-amino-acid chain; its full sequence is Imidazole glycerol phosphate synthase subunit HisF (252 aa).

Catalysis depends on residues Asp11 and Asp130.

Belongs to the HisA/HisF family. In terms of assembly, heterodimer of HisH and HisF.

It is found in the cytoplasm. The catalysed reaction is 5-[(5-phospho-1-deoxy-D-ribulos-1-ylimino)methylamino]-1-(5-phospho-beta-D-ribosyl)imidazole-4-carboxamide + L-glutamine = D-erythro-1-(imidazol-4-yl)glycerol 3-phosphate + 5-amino-1-(5-phospho-beta-D-ribosyl)imidazole-4-carboxamide + L-glutamate + H(+). Its pathway is amino-acid biosynthesis; L-histidine biosynthesis; L-histidine from 5-phospho-alpha-D-ribose 1-diphosphate: step 5/9. IGPS catalyzes the conversion of PRFAR and glutamine to IGP, AICAR and glutamate. The HisF subunit catalyzes the cyclization activity that produces IGP and AICAR from PRFAR using the ammonia provided by the HisH subunit. The protein is Imidazole glycerol phosphate synthase subunit HisF of Geobacillus kaustophilus (strain HTA426).